Consider the following 2587-residue polypeptide: Protein KINKY POLLEN (2587 aa).

A signal peptide spans 1 to 27 (MAAFLVMFIFTIALFVALLWVFFKSLP). N-linked (GlcNAc...) asparagine glycosylation occurs at N71. The segment at 103-124 (PSHSSKGPRKPKTRKSSSGGKG) is disordered. A compositionally biased stretch (basic residues) spans 108-117 (KGPRKPKTRK). N262, N281, and N485 each carry an N-linked (GlcNAc...) asparagine glycan. The tract at residues 270 to 290 (SKGEVIDSSSGNTTSEKPPKQ) is disordered. A compositionally biased stretch (polar residues) spans 276–285 (DSSSGNTTSE). Positions 589 to 611 (GSSSKNKQEKGAHRSKPPSGRGT) are disordered. Residues 691–716 (TLNKEIQSTQVELETAKAIYQEFLEE) adopt a coiled-coil conformation. The segment at 784 to 814 (QHGNRNPEEASTVTGDKQKEEPTTTPNSLDK) is disordered. N-linked (GlcNAc...) asparagine glycans are attached at residues N1155, N1250, N1281, and N1486. Disordered stretches follow at residues 1571 to 1608 (HCSK…KHPD), 1646 to 1673 (VDAR…DGYN), and 1729 to 1797 (EGNQ…PEEE). Positions 1576-1590 (AQMSRTSSLSGSTDR) are enriched in polar residues. N1595 carries an N-linked (GlcNAc...) asparagine glycan. A compositionally biased stretch (basic and acidic residues) spans 1646 to 1666 (VDARSTKEKQSEPEENSHSDP). Polar residues predominate over residues 1746-1760 (KQPSTGSGNLASQSK). N-linked (GlcNAc...) asparagine glycans are attached at residues N1861, N1951, N1981, N2036, and N2278. The stretch at 2006–2036 (IEEVELAKIELEAKERDRMMLLDDIRKLTQN) forms a coiled coil. A compositionally biased stretch (polar residues) spans 2274 to 2287 (QGSKNQSLKSSTIR). Disordered regions lie at residues 2274-2299 (QGSK…TSSF), 2319-2360 (SMEH…KKSR), and 2442-2469 (KDDI…RPGD). Composition is skewed to basic and acidic residues over residues 2289 to 2299 (SGRELRRTSSF), 2322 to 2336 (HQGE…DSKT), 2343 to 2359 (SVHE…DKKS), and 2442 to 2458 (KDDI…RTDQ). N2513 and N2544 each carry an N-linked (GlcNAc...) asparagine glycan. Residues 2533 to 2587 (IRRHSKKFQNQNTTKGSKKTQLSPTLSPPKEEDQYESDSSSGSSAYEEFLDQNQI) form a disordered region. A compositionally biased stretch (polar residues) spans 2540 to 2557 (FQNQNTTKGSKKTQLSPT). Residues 2569 to 2579 (SDSSSGSSAYE) are compositionally biased toward low complexity.

This sequence belongs to the SABRE family. In terms of tissue distribution, mostly expressed in pollen and roots, especially in tip-growing cells, but also present in seedlings, stems, leaves, buds, flowers, siliques and seeds.

The protein resides in the secreted. Its subcellular location is the golgi apparatus. May be involved in membrane trafficking. Required for tip growth in pollen tubes and root hairs. In Arabidopsis thaliana (Mouse-ear cress), this protein is Protein KINKY POLLEN.